Here is a 512-residue protein sequence, read N- to C-terminus: tRNA modification GTPase gtpbp3, mitochondrial (512 aa).

One can recognise a TrmE-type G domain in the interval 246-434; that stretch reads GANIAIVGPP…LLNLLKLNLK (189 aa). GTP contacts are provided by residues 253-260, 300-304, and 375-378; these read GPPNAGKS, DTAGL, and NKSD.

The protein belongs to the TRAFAC class TrmE-Era-EngA-EngB-Septin-like GTPase superfamily. TrmE GTPase family.

The protein localises to the mitochondrion. Its function is as follows. GTPase involved in the 5-carboxymethylaminomethyl modification (mnm(5)s(2)U34) of the wobble uridine base in mitochondrial tRNAs. The chain is tRNA modification GTPase gtpbp3, mitochondrial (gtpbp3) from Dictyostelium discoideum (Social amoeba).